The chain runs to 481 residues: METMPNWLMQRAFLTPDRTAIEIEEEKVTFVQLHEKVVSVCEHLTHVGVKRAQKVAVLMKNGMEMITVIHALSYIGAVAVLLNTRLSREELLWQMDDAEVVCLVTDQEFETENVPVCSFAEVMQGPKAEAFIQEEFSLEEAMTIIYTSGTTGKPKGVILTYGNHWASAVGSSLNLGLRDDDCWLACMPMFHVGGLSLLMKNIMYGMRILLVPKYDANFIHKALQTRGVTIISVVSKMLTDLLERLGEGTYPSSLRCMLLGGGPAPKPLLETCVEKGIPVYQTYGMTETSSQICTLTADYMLTKVGSAGKPLFQCQLRIEKDGVVVPPRAEGEIVVKGPNVTGGYFNREDATHEAIRNGWLHTGDLGYLDEEGFLYVLDRRSDLIISGGENIYPAQIEEVLLSHPAVVEAGVVGMADESWGQVPAAFVVKSGDVTEEEIIRFCEEKLAKYKVPKKACFLEELPRNASKKLLRRELRKLVEEM.

This sequence belongs to the ATP-dependent AMP-binding enzyme family. MenE subfamily.

It catalyses the reaction 2-succinylbenzoate + ATP + CoA = 2-succinylbenzoyl-CoA + AMP + diphosphate. It functions in the pathway quinol/quinone metabolism; 1,4-dihydroxy-2-naphthoate biosynthesis; 1,4-dihydroxy-2-naphthoate from chorismate: step 5/7. Its pathway is quinol/quinone metabolism; menaquinone biosynthesis. In terms of biological role, converts 2-succinylbenzoate (OSB) to 2-succinylbenzoyl-CoA (OSB-CoA). The sequence is that of 2-succinylbenzoate--CoA ligase from Bacillus mycoides (strain KBAB4) (Bacillus weihenstephanensis).